We begin with the raw amino-acid sequence, 249 residues long: Methionine aminopeptidase (249 aa).

His-77 lines the substrate pocket. Residues Asp-94, Asp-105, and His-168 each contribute to the a divalent metal cation site. A substrate-binding site is contributed by His-175. A divalent metal cation-binding residues include Glu-201 and Glu-232.

Belongs to the peptidase M24A family. Methionine aminopeptidase type 1 subfamily. Monomer. Requires Co(2+) as cofactor. The cofactor is Zn(2+). Mn(2+) is required as a cofactor. Fe(2+) serves as cofactor.

It carries out the reaction Release of N-terminal amino acids, preferentially methionine, from peptides and arylamides.. Its function is as follows. Removes the N-terminal methionine from nascent proteins. The N-terminal methionine is often cleaved when the second residue in the primary sequence is small and uncharged (Met-Ala-, Cys, Gly, Pro, Ser, Thr, or Val). Requires deformylation of the N(alpha)-formylated initiator methionine before it can be hydrolyzed. The protein is Methionine aminopeptidase of Clostridium perfringens (strain 13 / Type A).